The chain runs to 528 residues: MPLTMSQAFIGNFLGNSPKWYKIAILSFLIINPILFFYVSPFVAGWVLVLEFIFTLAMALKCYPLQPGGLLAIEAVAIGMTSANQVLHEIEANLEVLLLLVFMVAGIYFMKQLLLFAFTKIITKVRSKILVSLMFCLTSAFLSAFLDALTVIAVIIAVAVGFYAIYHKVASGKDFSAVHDHTSESNNQLNNSELESFRGFLRNLLMHAGVGTALGGVCTMVGEPQNLIIAAQANWQFGEFVIRMSPVTVPVLIAGILTCLLVEKFRIFGYGAKLPDAVHKILCDYAAHEDAHRTNKDKMKLVIQVLVGVWLIAGLALHLASVGLVGLSVIILTTAFNGITDEHALGKAFEEALPFTALLAVFFAVVAVIIDQHLFAPVIQWALSYEGNTQLVIFYIANGLLSMVSDNVFVGTVYINEVKAALIDGQITRDQFDLLAVAINTGTNLPSVATPNGQAAFLFLLTSALAPLIRLSYGRMVWMALPYTIVLSVVGVLAIETGFLEQATQYFYDSHMIIHHSAKDVIAPLTSH.

11 helical membrane passes run 10-30 (IGNF…SFLI), 63-83 (YPLQ…MTSA), 96-116 (VLLL…LLLF), 131-165 (VSLM…FYAI), 204-224 (LLMH…VGEP), 240-260 (FVIR…LTCL), 305-325 (VLVG…VGLV), 359-379 (LAVF…APVI), 391-411 (LVIF…VFVG), 449-469 (ATPN…APLI), and 476-496 (MVWM…LAIE).

It belongs to the NhaB Na(+)/H(+) (TC 2.A.34) antiporter family.

It localises to the cell inner membrane. It carries out the reaction 2 Na(+)(in) + 3 H(+)(out) = 2 Na(+)(out) + 3 H(+)(in). Functionally, na(+)/H(+) antiporter that extrudes sodium in exchange for external protons. This is Na(+)/H(+) antiporter NhaB from Shewanella putrefaciens (strain CN-32 / ATCC BAA-453).